A 389-amino-acid polypeptide reads, in one-letter code: S-adenosylmethionine synthase (389 aa).

His-17 is an ATP binding site. Asp-19 contributes to the Mg(2+) binding site. Glu-45 lines the K(+) pocket. L-methionine-binding residues include Glu-58 and Gln-101. The interval 101-111 (QSPDISQGVTE) is flexible loop. ATP-binding positions include 168 to 170 (DSK), 234 to 235 (RF), Asp-243, 249 to 250 (RK), Ala-266, and Lys-270. Asp-243 provides a ligand contact to L-methionine. An L-methionine-binding site is contributed by Lys-274.

It belongs to the AdoMet synthase family. In terms of assembly, homotetramer; dimer of dimers. It depends on Mg(2+) as a cofactor. Requires K(+) as cofactor.

It is found in the cytoplasm. It carries out the reaction L-methionine + ATP + H2O = S-adenosyl-L-methionine + phosphate + diphosphate. It participates in amino-acid biosynthesis; S-adenosyl-L-methionine biosynthesis; S-adenosyl-L-methionine from L-methionine: step 1/1. In terms of biological role, catalyzes the formation of S-adenosylmethionine (AdoMet) from methionine and ATP. The overall synthetic reaction is composed of two sequential steps, AdoMet formation and the subsequent tripolyphosphate hydrolysis which occurs prior to release of AdoMet from the enzyme. The protein is S-adenosylmethionine synthase of Geobacter metallireducens (strain ATCC 53774 / DSM 7210 / GS-15).